A 209-amino-acid polypeptide reads, in one-letter code: Uracil phosphoribosyltransferase (209 aa).

Residues arginine 79, arginine 104, and 131–139 (DPMLATGNS) contribute to the 5-phospho-alpha-D-ribose 1-diphosphate site. Residues isoleucine 194 and 199–201 (GDA) contribute to the uracil site. Aspartate 200 contacts 5-phospho-alpha-D-ribose 1-diphosphate.

The protein belongs to the UPRTase family. Mg(2+) is required as a cofactor.

It carries out the reaction UMP + diphosphate = 5-phospho-alpha-D-ribose 1-diphosphate + uracil. It functions in the pathway pyrimidine metabolism; UMP biosynthesis via salvage pathway; UMP from uracil: step 1/1. Allosterically activated by GTP. Its function is as follows. Catalyzes the conversion of uracil and 5-phospho-alpha-D-ribose 1-diphosphate (PRPP) to UMP and diphosphate. In Variovorax paradoxus (strain S110), this protein is Uracil phosphoribosyltransferase.